The chain runs to 147 residues: 3-dehydroquinate dehydratase (147 aa).

The Proton acceptor role is filled by Tyr24. Positions 75, 81, and 88 each coordinate substrate. The active-site Proton donor is His101. Residues 102 to 103 and Arg112 contribute to the substrate site; that span reads IS.

The protein belongs to the type-II 3-dehydroquinase family. Homododecamer.

It catalyses the reaction 3-dehydroquinate = 3-dehydroshikimate + H2O. The protein operates within metabolic intermediate biosynthesis; chorismate biosynthesis; chorismate from D-erythrose 4-phosphate and phosphoenolpyruvate: step 3/7. In terms of biological role, catalyzes a trans-dehydration via an enolate intermediate. In Cereibacter sphaeroides (strain KD131 / KCTC 12085) (Rhodobacter sphaeroides), this protein is 3-dehydroquinate dehydratase.